Here is a 427-residue protein sequence, read N- to C-terminus: Acyltransferase fer5 (427 aa).

The interval 1-24 (MTAATSVQPSPAPRQPGLRATFNP) is disordered. Substrate is bound at residue His342. Residue Glu380 is the Proton acceptor of the active site.

Belongs to the lysine N-acyltransferase mbtK family.

It participates in siderophore biosynthesis. Functionally, acyltransferase; part of the gene cluster that mediates the biosynthesis of siderophore ferrichrome A which is contributing to organismal virulence. The first step of ferrichrome A biosynthesis is performed by the HMG-CoA synthase hcs1 which catalyzes the generation of HMG-CoA and CoA using acetoacetyl-CoA and acetyl-CoA as substrates. The enoyl-CoA isomerase/hydratase fer4 then catalyzes the conversion of hcs1-produced HMG-CoA to methylglutaconyl-CoA. The acyltransferase fer5 then fuses the fer4-generated methylglutaconyl-CoA with sid1-generated hydroxyornithine to yield methylglutaconyl hydroxyornithine. Methylglutaconyl hydroxyornithine is then available for use by the NRPS fer3 to generate ferrichrome A. This chain is Acyltransferase fer5, found in Mycosarcoma maydis (Corn smut fungus).